The chain runs to 535 residues: Sodium/hydrogen exchanger 1 (535 aa).

Residues 1–21 (MGMEVAAARLGALYTTSDYAS) lie on the Cytoplasmic side of the membrane. Residues 22–42 (VVSINLFVALLCACIVLGHLL) traverse the membrane as a helical segment. Residues 43-46 (EENR) are Vacuolar-facing. A helical transmembrane segment spans residues 47–67 (WVNESITALIIGLCTGVVILL). Residues 68–75 (MTKGKSSH) lie on the Cytoplasmic side of the membrane. Residues 76–96 (LFVFSEDLFFIYLLPPIIFNA) form a helical membrane-spanning segment. The Vacuolar portion of the chain corresponds to 97–114 (GFQVKKKQFFRNFMTITL). Residues 115 to 135 (FGAVGTMISFFTISIAAIAIF) form a helical membrane-spanning segment. Topologically, residues 136–137 (SR) are cytoplasmic. The chain crosses the membrane as a helical span at residues 138–158 (MNIGTLDVGDFLAIGAIFSAT). Topologically, residues 159-173 (DSVCTLQVLNQDETP) are vacuolar. A helical membrane pass occupies residues 174 to 194 (FLYSLVFGEGVVNDATSIVLF). Residues 195-218 (NALQNFDLVHIDAAVVLKFLGNFF) are Cytoplasmic-facing. A helical membrane pass occupies residues 219 to 239 (YLFLSSTFLGVFAGLLSAYII). Residues 240–264 (KKLYIGRHSTDREVALMMLMAYLSY) are Vacuolar-facing. The chain crosses the membrane as a helical span at residues 265–285 (MLAELLDLSGILTVFFCGIVM). Over 286 to 304 (SHYTWHNVTESSRVTTKHA) the chain is Cytoplasmic. A helical transmembrane segment spans residues 305 to 325 (FATLSFIAETFLFLYVGMDAL). The Vacuolar portion of the chain corresponds to 326-344 (DIEKWEFASDRPGKSIGIS). The helical transmembrane segment at 345–365 (SILLGLVLIGRAAFVFPLSFL) threads the bilayer. At 366-381 (SNLTKKAPNEKITWRQ) the chain is on the cytoplasmic side. A helical membrane pass occupies residues 382–402 (QVVIWWAGLMRGAVSIALAYN). Over 403–415 (KFTRSGHTQLHGN) the chain is Vacuolar. A helical transmembrane segment spans residues 416-436 (AIMITSTITVVLFSTMVFGMM). At 437–535 (TKPLIRLLLP…SPTEQSHGGR (99 aa)) the chain is on the cytoplasmic side. Residues 452–478 (VTSEPSSPKSLHSPLLTSMQGSDLEST) form a disordered region. Over residues 454-469 (SEPSSPKSLHSPLLTS) the composition is skewed to low complexity.

Belongs to the monovalent cation:proton antiporter 1 (CPA1) transporter (TC 2.A.36) family.

Its subcellular location is the vacuole membrane. It catalyses the reaction Na(+)(in) + H(+)(out) = Na(+)(out) + H(+)(in). The enzyme catalyses K(+)(in) + H(+)(out) = K(+)(out) + H(+)(in). Vacuolar antiporter that acts in low affinity electroneutral exchange of protons H(+) for cations such as Na(+) or K(+) across membranes. Plays important roles in the transport of Na(+) and K(+) accumulated in the cytoplasm into vacuoles, and is involved in salt stress tolerance. The sequence is that of Sodium/hydrogen exchanger 1 from Oryza sativa subsp. japonica (Rice).